The primary structure comprises 100 residues: Large ribosomal subunit protein bL28 (100 aa).

The protein belongs to the bacterial ribosomal protein bL28 family.

The protein is Large ribosomal subunit protein bL28 of Ehrlichia ruminantium (strain Welgevonden).